The sequence spans 478 residues: Cytochrome P450 monooxygenase ATR3 (478 aa).

A helical transmembrane segment spans residues 20–42; sequence AVAFVTASALYYVLPAAISHIQL. N-linked (GlcNAc...) asparagine glycosylation is found at N159 and N268.

Belongs to the cytochrome P450 family. Heme serves as cofactor.

The protein localises to the membrane. Its pathway is mycotoxin biosynthesis. In terms of biological role, cytochrome P450 monooxygenase; part of the core atranone cluster (CAC) which products are predicted to catalyze most or all steps of mycotoxin atranone synthesis, starting from geranylgeranyl pyrophosphate (GGPP). The initial cyclization of GGPP to dolabellane is probably performed by the terpene cyclase ATR13. The Baeyer-Villiger oxidation near the end of the atranone synthesis, which converts atranones D and E to atranones F and G is predicted to be catalyzed by the monooxygenase ATR8. Of the CAC's other predicted gene products, the reducing PKS ATR6 might synthesize a polyketide chain. This polyketide is probably transferred onto the atranone backbone by the polyketide transferase ATR5. Other predicted CAC products include 4 oxygenases (ATR2, ATR3, ATR4, and ATR14), 3 short-chain reductases (ATR7, ATR9, and ATR10), and a methyltransferase (ATR12). These may all be involved in the various steps of atranone biosynthesis, although their specific roles must await experimental determination. The protein is Cytochrome P450 monooxygenase ATR3 of Stachybotrys chlorohalonatus (strain IBT 40285).